We begin with the raw amino-acid sequence, 680 residues long: DNA-directed RNA polymerase subunit beta' (680 aa).

The Zn(2+) site is built by Cys-69, Cys-71, Cys-87, and Cys-90. The Mg(2+) site is built by Asp-489, Asp-491, and Asp-493.

The protein belongs to the RNA polymerase beta' chain family. RpoC1 subfamily. In plastids the minimal PEP RNA polymerase catalytic core is composed of four subunits: alpha, beta, beta', and beta''. When a (nuclear-encoded) sigma factor is associated with the core the holoenzyme is formed, which can initiate transcription. It depends on Mg(2+) as a cofactor. The cofactor is Zn(2+).

The protein resides in the plastid. It is found in the chloroplast. The catalysed reaction is RNA(n) + a ribonucleoside 5'-triphosphate = RNA(n+1) + diphosphate. DNA-dependent RNA polymerase catalyzes the transcription of DNA into RNA using the four ribonucleoside triphosphates as substrates. This Nandina domestica (Heavenly bamboo) protein is DNA-directed RNA polymerase subunit beta'.